A 658-amino-acid chain; its full sequence is Putative arrestin-related trafficking adapter C2D10.04 (658 aa).

Disordered regions lie at residues 21–107 and 638–658; these read LHHQ…LTWS and REEA…EIPR. Positions 39-81 are enriched in low complexity; the sequence is NRSSNSGLNRRNSVFGLPSSGLSSRLSKPSLSSINNSNNSSSN. Over residues 96–107 the composition is skewed to polar residues; sequence RNMSNKPPLTWS. Serine 653 carries the post-translational modification Phosphoserine.

This sequence belongs to the ALY1 family.

Its subcellular location is the cytoplasm. Its function is as follows. May regulate endocytosis in response to extracellular stimuli. This Schizosaccharomyces pombe (strain 972 / ATCC 24843) (Fission yeast) protein is Putative arrestin-related trafficking adapter C2D10.04.